The sequence spans 361 residues: Replication factor C subunit 3 (361 aa).

The span at 1–28 (MAGATAATPMDIDAAAPPPGAAAKGKAP) shows a compositional bias: low complexity. The segment at 1-39 (MAGATAATPMDIDAAAPPPGAAAKGKAPLSSTPGGRAAP) is disordered. 77–84 (YGPPGTGK) is a binding site for ATP.

The protein belongs to the activator 1 small subunits family. As to quaternary structure, heterotetramer of subunits RFC2, RFC3, RFC4 and RFC5 that can form a complex with RFC1. Expressed in roots, leaves, shoot apical meristem (SAM), flag leaves and panicles.

The protein resides in the nucleus. Functionally, may be involved in DNA replication and thus regulate cell proliferation. The chain is Replication factor C subunit 3 (RFC3) from Oryza sativa subsp. japonica (Rice).